We begin with the raw amino-acid sequence, 223 residues long: MTSNQLAQYIDHTALTAEKNEQDISTLCNEAIEHGFYSVCINSGYIPLAKEKLAGSNVKICTVVGFPLGANLTSVKAFETQEAIKAGANEIDMVINVGWIKSQKWDEVKQDIQAVFNACNGTPLKVILETCLLTKDEIVKACEICKEIGVAFVKTSTGFNKGGATVEDVALMKQTVGNIGVKASGGVRDTETALAMIKAGATRIGASAGIAIISGTQDTQSTY.

Catalysis depends on aspartate 92, which acts as the Proton donor/acceptor. The Schiff-base intermediate with acetaldehyde role is filled by lysine 154. Lysine 182 (proton donor/acceptor) is an active-site residue.

This sequence belongs to the DeoC/FbaB aldolase family. DeoC type 1 subfamily.

It localises to the cytoplasm. The enzyme catalyses 2-deoxy-D-ribose 5-phosphate = D-glyceraldehyde 3-phosphate + acetaldehyde. The protein operates within carbohydrate degradation; 2-deoxy-D-ribose 1-phosphate degradation; D-glyceraldehyde 3-phosphate and acetaldehyde from 2-deoxy-alpha-D-ribose 1-phosphate: step 2/2. Catalyzes a reversible aldol reaction between acetaldehyde and D-glyceraldehyde 3-phosphate to generate 2-deoxy-D-ribose 5-phosphate. This chain is Deoxyribose-phosphate aldolase, found in Haemophilus influenzae (strain PittEE).